Consider the following 419-residue polypeptide: Tyrosine--tRNA ligase (419 aa).

Tyr-34 is a binding site for L-tyrosine. Residues 39–48 (PTADSLHIGN) carry the 'HIGH' region motif. Residues Tyr-169 and Gln-173 each coordinate L-tyrosine. Residues 230–234 (KFGKT) carry the 'KMSKS' region motif. Position 233 (Lys-233) interacts with ATP. An S4 RNA-binding domain is found at 352-419 (VPLVELLVSA…KKKYYLIRYA (68 aa)).

Belongs to the class-I aminoacyl-tRNA synthetase family. TyrS type 1 subfamily. In terms of assembly, homodimer.

It is found in the cytoplasm. It catalyses the reaction tRNA(Tyr) + L-tyrosine + ATP = L-tyrosyl-tRNA(Tyr) + AMP + diphosphate + H(+). In terms of biological role, catalyzes the attachment of tyrosine to tRNA(Tyr) in a two-step reaction: tyrosine is first activated by ATP to form Tyr-AMP and then transferred to the acceptor end of tRNA(Tyr). This chain is Tyrosine--tRNA ligase, found in Bacillus caldotenax.